We begin with the raw amino-acid sequence, 92 residues long: Small ribosomal subunit protein uS19 (92 aa).

It belongs to the universal ribosomal protein uS19 family.

Functionally, protein S19 forms a complex with S13 that binds strongly to the 16S ribosomal RNA. This is Small ribosomal subunit protein uS19 from Listeria innocua serovar 6a (strain ATCC BAA-680 / CLIP 11262).